Here is a 700-residue protein sequence, read N- to C-terminus: Methionine--tRNA ligase (700 aa).

Residues 14-24 (PYANGPVHLGH) carry the 'HIGH' region motif. Residues C146, C149, C159, and C162 each contribute to the Zn(2+) site. Residues 343–347 (KFSKS) carry the 'KMSKS' region motif. K346 provides a ligand contact to ATP. Residues 599–700 (EFEKIDLRVA…GDSIVGKPVK (102 aa)) enclose the tRNA-binding domain.

Belongs to the class-I aminoacyl-tRNA synthetase family. MetG type 1 subfamily. Homodimer. Requires Zn(2+) as cofactor.

The protein resides in the cytoplasm. The enzyme catalyses tRNA(Met) + L-methionine + ATP = L-methionyl-tRNA(Met) + AMP + diphosphate. In terms of biological role, is required not only for elongation of protein synthesis but also for the initiation of all mRNA translation through initiator tRNA(fMet) aminoacylation. The sequence is that of Methionine--tRNA ligase from Chloroherpeton thalassium (strain ATCC 35110 / GB-78).